The chain runs to 284 residues: 2-dehydro-3-deoxyphosphooctonate aldolase (284 aa).

The protein belongs to the KdsA family.

It is found in the cytoplasm. It catalyses the reaction D-arabinose 5-phosphate + phosphoenolpyruvate + H2O = 3-deoxy-alpha-D-manno-2-octulosonate-8-phosphate + phosphate. It functions in the pathway carbohydrate biosynthesis; 3-deoxy-D-manno-octulosonate biosynthesis; 3-deoxy-D-manno-octulosonate from D-ribulose 5-phosphate: step 2/3. The protein operates within bacterial outer membrane biogenesis; lipopolysaccharide biosynthesis. The sequence is that of 2-dehydro-3-deoxyphosphooctonate aldolase from Ralstonia pickettii (strain 12J).